The following is a 128-amino-acid chain: Cystatin-12 (128 aa).

The signal sequence occupies residues 1–21; it reads MLWKSVLPVALIVLGIHDCSF. Cystine bridges form between C82–C92 and C105–C125. N122 carries an N-linked (GlcNAc...) asparagine glycan.

It belongs to the cystatin family.

The protein localises to the secreted. May play a specialized role in spermatogenesis. This is Cystatin-12 (Cst12) from Rattus norvegicus (Rat).